A 143-amino-acid polypeptide reads, in one-letter code: MAKKIVGFIKLQVPAGKANPSPPIGPALGQRGLNIMEFCKAFNAQTQGVEPGLPLPVVITAFADKSFTFVIKTPPATVLIKKAIKLDKGSSNALSTKVGKITRAQLEEIAKTKLKDMNAASVDAAVRTLAGSARSMGVTVEGL.

The protein belongs to the universal ribosomal protein uL11 family. In terms of assembly, part of the ribosomal stalk of the 50S ribosomal subunit. Interacts with L10 and the large rRNA to form the base of the stalk. L10 forms an elongated spine to which L12 dimers bind in a sequential fashion forming a multimeric L10(L12)X complex. In terms of processing, one or more lysine residues are methylated.

Functionally, forms part of the ribosomal stalk which helps the ribosome interact with GTP-bound translation factors. The polypeptide is Large ribosomal subunit protein uL11 (Acidovorax ebreus (strain TPSY) (Diaphorobacter sp. (strain TPSY))).